A 412-amino-acid chain; its full sequence is Subtilisin-like protease 6 (412 aa).

The N-terminal stretch at 1–20 (MGFITKAIPIVLAALSTVNG) is a signal peptide. The propeptide occupies 21–127 (ARILEAGPHA…VRATTNGTNL (107 aa)). The Inhibitor I9 domain occupies 36-120 (KYIVVMKKDV…FIEPDFVVRA (85 aa)). Residues 135–412 (SWGLARVSTR…SKLIYNGSGK (278 aa)) enclose the Peptidase S8 domain. Residues D167 and H198 each act as charge relay system in the active site. 3 N-linked (GlcNAc...) asparagine glycosylation sites follow: N252, N264, and N325. Catalysis depends on S358, which acts as the Charge relay system. N408 carries N-linked (GlcNAc...) asparagine glycosylation.

It belongs to the peptidase S8 family.

It localises to the secreted. Secreted subtilisin-like serine protease with keratinolytic activity that contributes to pathogenicity. The protein is Subtilisin-like protease 6 (SUB6) of Trichophyton verrucosum (strain HKI 0517).